Consider the following 318-residue polypeptide: NAD(P)H-dependent D-xylose reductase (318 aa).

Tyr48 functions as the Proton donor in the catalytic mechanism. His110 is a substrate binding site. NAD(+) is bound by residues 165–166 (SN), 214–223 (SNFGPLSFLE), and 270–280 (KSTFPNTLAVN).

This sequence belongs to the aldo/keto reductase family.

It carries out the reaction xylitol + NAD(+) = D-xylose + NADH + H(+). It catalyses the reaction xylitol + NADP(+) = D-xylose + NADPH + H(+). It functions in the pathway carbohydrate metabolism; D-xylose degradation. Reduces D-xylose into xylitol. Has a preference for NADPH, but can also utilize NADH as cosubstrate. The polypeptide is NAD(P)H-dependent D-xylose reductase (XYL1) (Pachysolen tannophilus (Yeast)).